The primary structure comprises 285 residues: RING finger protein 223 (285 aa).

The RING-type zinc finger occupies Cys81 to Arg132. The helical transmembrane segment at Val230 to Cys250 threads the bilayer.

The protein resides in the membrane. This is RING finger protein 223 (Rnf223) from Mus musculus (Mouse).